A 254-amino-acid chain; its full sequence is 5'/3'-nucleotidase SurE (254 aa).

The a divalent metal cation site is built by Asp-9, Asp-10, Ser-40, and Asn-93.

The protein belongs to the SurE nucleotidase family. Requires a divalent metal cation as cofactor.

Its subcellular location is the cytoplasm. The enzyme catalyses a ribonucleoside 5'-phosphate + H2O = a ribonucleoside + phosphate. It catalyses the reaction a ribonucleoside 3'-phosphate + H2O = a ribonucleoside + phosphate. It carries out the reaction [phosphate](n) + H2O = [phosphate](n-1) + phosphate + H(+). Nucleotidase with a broad substrate specificity as it can dephosphorylate various ribo- and deoxyribonucleoside 5'-monophosphates and ribonucleoside 3'-monophosphates with highest affinity to 3'-AMP. Also hydrolyzes polyphosphate (exopolyphosphatase activity) with the preference for short-chain-length substrates (P20-25). Might be involved in the regulation of dNTP and NTP pools, and in the turnover of 3'-mononucleotides produced by numerous intracellular RNases (T1, T2, and F) during the degradation of various RNAs. This chain is 5'/3'-nucleotidase SurE, found in Proteus mirabilis (strain HI4320).